Consider the following 96-residue polypeptide: Co-chaperonin GroES 1 (96 aa).

The protein belongs to the GroES chaperonin family. As to quaternary structure, heptamer of 7 subunits arranged in a ring. Interacts with the chaperonin GroEL.

Its subcellular location is the cytoplasm. Together with the chaperonin GroEL, plays an essential role in assisting protein folding. The GroEL-GroES system forms a nano-cage that allows encapsulation of the non-native substrate proteins and provides a physical environment optimized to promote and accelerate protein folding. GroES binds to the apical surface of the GroEL ring, thereby capping the opening of the GroEL channel. The sequence is that of Co-chaperonin GroES 1 from Vibrio vulnificus (strain CMCP6).